The primary structure comprises 698 residues: tRNA (guanine(37)-N(1))-methyltransferase (698 aa).

Residues 233–254 (DSTAHDSVQRNEGKTPKGPLDG) are disordered. Positions 234-247 (STAHDSVQRNEGKT) are enriched in basic and acidic residues. S-adenosyl-L-methionine-binding positions include arginine 394, 432–433 (DI), and 459–460 (DA). Disordered stretches follow at residues 500-522 (PDQN…GHVD) and 534-582 (KKKL…DAPR). Composition is skewed to basic and acidic residues over residues 513–522 (RESDRVGHVD), 539–550 (HADTNDPLEERP), and 569–582 (TNND…DAPR). Asparagine 603 serves as a coordination point for S-adenosyl-L-methionine.

It belongs to the class I-like SAM-binding methyltransferase superfamily. TRM5/TYW2 family. In terms of assembly, monomer.

Its subcellular location is the mitochondrion matrix. The protein resides in the nucleus. It localises to the cytoplasm. The catalysed reaction is guanosine(37) in tRNA + S-adenosyl-L-methionine = N(1)-methylguanosine(37) in tRNA + S-adenosyl-L-homocysteine + H(+). Specifically methylates the N1 position of guanosine-37 in various cytoplasmic and mitochondrial tRNAs. Methylation is not dependent on the nature of the nucleoside 5' of the target nucleoside. This is the first step in the biosynthesis of wybutosine (yW), a modified base adjacent to the anticodon of tRNAs and required for accurate decoding. This chain is tRNA (guanine(37)-N(1))-methyltransferase, found in Plasmodium knowlesi (strain H).